The sequence spans 61 residues: UPF0391 membrane protein Pnap_0032 (61 aa).

A run of 2 helical transmembrane segments spans residues 5-25 and 33-53; these read AIIF…GVAA and VLFG…ALGV.

It belongs to the UPF0391 family.

Its subcellular location is the cell membrane. This is UPF0391 membrane protein Pnap_0032 from Polaromonas naphthalenivorans (strain CJ2).